We begin with the raw amino-acid sequence, 258 residues long: Phosphoribosylformylglycinamidine synthase subunit PurQ (258 aa).

A Glutamine amidotransferase type-1 domain is found at 7-238 (IGILLMEGTN…QAMYLETEKD (232 aa)). Cys-97 serves as the catalytic Nucleophile. Residues His-220 and Glu-222 contribute to the active site.

Part of the FGAM synthase complex composed of 1 PurL, 1 PurQ and 2 PurS subunits.

The protein localises to the cytoplasm. It carries out the reaction N(2)-formyl-N(1)-(5-phospho-beta-D-ribosyl)glycinamide + L-glutamine + ATP + H2O = 2-formamido-N(1)-(5-O-phospho-beta-D-ribosyl)acetamidine + L-glutamate + ADP + phosphate + H(+). The enzyme catalyses L-glutamine + H2O = L-glutamate + NH4(+). It functions in the pathway purine metabolism; IMP biosynthesis via de novo pathway; 5-amino-1-(5-phospho-D-ribosyl)imidazole from N(2)-formyl-N(1)-(5-phospho-D-ribosyl)glycinamide: step 1/2. In terms of biological role, part of the phosphoribosylformylglycinamidine synthase complex involved in the purines biosynthetic pathway. Catalyzes the ATP-dependent conversion of formylglycinamide ribonucleotide (FGAR) and glutamine to yield formylglycinamidine ribonucleotide (FGAM) and glutamate. The FGAM synthase complex is composed of three subunits. PurQ produces an ammonia molecule by converting glutamine to glutamate. PurL transfers the ammonia molecule to FGAR to form FGAM in an ATP-dependent manner. PurS interacts with PurQ and PurL and is thought to assist in the transfer of the ammonia molecule from PurQ to PurL. The chain is Phosphoribosylformylglycinamidine synthase subunit PurQ from Thermoplasma volcanium (strain ATCC 51530 / DSM 4299 / JCM 9571 / NBRC 15438 / GSS1).